A 259-amino-acid chain; its full sequence is Acyl-[acyl-carrier-protein]--UDP-N-acetylglucosamine O-acyltransferase (259 aa).

This sequence belongs to the transferase hexapeptide repeat family. LpxA subfamily. As to quaternary structure, homotrimer.

The protein resides in the cytoplasm. It carries out the reaction a (3R)-hydroxyacyl-[ACP] + UDP-N-acetyl-alpha-D-glucosamine = a UDP-3-O-[(3R)-3-hydroxyacyl]-N-acetyl-alpha-D-glucosamine + holo-[ACP]. Its pathway is glycolipid biosynthesis; lipid IV(A) biosynthesis; lipid IV(A) from (3R)-3-hydroxytetradecanoyl-[acyl-carrier-protein] and UDP-N-acetyl-alpha-D-glucosamine: step 1/6. Its function is as follows. Involved in the biosynthesis of lipid A, a phosphorylated glycolipid that anchors the lipopolysaccharide to the outer membrane of the cell. The polypeptide is Acyl-[acyl-carrier-protein]--UDP-N-acetylglucosamine O-acyltransferase (Akkermansia muciniphila (strain ATCC BAA-835 / DSM 22959 / JCM 33894 / BCRC 81048 / CCUG 64013 / CIP 107961 / Muc)).